A 216-amino-acid polypeptide reads, in one-letter code: 3-isopropylmalate dehydratase small subunit (216 aa).

This sequence belongs to the LeuD family. LeuD type 1 subfamily. Heterodimer of LeuC and LeuD.

It catalyses the reaction (2R,3S)-3-isopropylmalate = (2S)-2-isopropylmalate. It participates in amino-acid biosynthesis; L-leucine biosynthesis; L-leucine from 3-methyl-2-oxobutanoate: step 2/4. Functionally, catalyzes the isomerization between 2-isopropylmalate and 3-isopropylmalate, via the formation of 2-isopropylmaleate. This Burkholderia mallei (strain NCTC 10247) protein is 3-isopropylmalate dehydratase small subunit.